We begin with the raw amino-acid sequence, 360 residues long: UPF0284 protein APE_2029.1 (360 aa).

The protein belongs to the UPF0284 family.

The chain is UPF0284 protein APE_2029.1 from Aeropyrum pernix (strain ATCC 700893 / DSM 11879 / JCM 9820 / NBRC 100138 / K1).